Here is a 488-residue protein sequence, read N- to C-terminus: GTPase Der (488 aa).

2 EngA-type G domains span residues 3 to 166 and 199 to 372; these read PVVA…AEAM and IKLA…DSAT. GTP-binding positions include 9–16, 56–60, 118–121, 205–212, 252–256, and 317–320; these read GRPNVGKS, DTGGI, NKVD, GKPNVGKS, DTAGV, and NKWD. The KH-like domain maps to 373–457; that stretch reads RRVSTSMLTR…PIQLRFQEGD (85 aa). The tract at residues 469–488 is disordered; the sequence is MSQERRRKRALSHIKDRKTK. Basic residues predominate over residues 473–488; that stretch reads RRRKRALSHIKDRKTK.

The protein belongs to the TRAFAC class TrmE-Era-EngA-EngB-Septin-like GTPase superfamily. EngA (Der) GTPase family. Associates with the 50S ribosomal subunit.

Its function is as follows. GTPase that plays an essential role in the late steps of ribosome biogenesis. The polypeptide is GTPase Der (Shewanella sp. (strain W3-18-1)).